A 75-amino-acid chain; its full sequence is UPF0291 protein Teth39_0326 (75 aa).

This sequence belongs to the UPF0291 family.

It localises to the cytoplasm. The protein is UPF0291 protein Teth39_0326 of Thermoanaerobacter pseudethanolicus (strain ATCC 33223 / 39E) (Clostridium thermohydrosulfuricum).